The chain runs to 173 residues: 16S rRNA aminocarboxypropyltransferase (173 aa).

S-adenosyl-L-methionine contacts are provided by threonine 25, leucine 72, leucine 96, and serine 115.

The protein belongs to the TDD superfamily. TSR3 family.

Its subcellular location is the cytoplasm. The enzyme catalyses an N(1)-methylpseudouridine in rRNA + S-adenosyl-L-methionine = N(1)-methyl-N(3)-[(3S)-3-amino-3-carboxypropyl]pseudouridine in rRNA + S-methyl-5'-thioadenosine + H(+). Its function is as follows. Aminocarboxypropyltransferase that catalyzes the aminocarboxypropyl transfer on pseudouridine corresponding to position 914 in M.jannaschii 16S rRNA. It constitutes the last step in biosynthesis of the hypermodified N1-methyl-N3-(3-amino-3-carboxypropyl) pseudouridine (m1acp3-Psi). The chain is 16S rRNA aminocarboxypropyltransferase from Methanosarcina mazei (strain ATCC BAA-159 / DSM 3647 / Goe1 / Go1 / JCM 11833 / OCM 88) (Methanosarcina frisia).